A 113-amino-acid chain; its full sequence is Small ribosomal subunit protein bS6 (113 aa).

It belongs to the bacterial ribosomal protein bS6 family.

Functionally, binds together with bS18 to 16S ribosomal RNA. The chain is Small ribosomal subunit protein bS6 from Wigglesworthia glossinidia brevipalpis.